We begin with the raw amino-acid sequence, 552 residues long: Probable glucomannan 4-beta-mannosyltransferase 10 (552 aa).

A helical transmembrane segment spans residues 62–82 (IVPLFKCLVAFCLIISLLVFI). The active site involves D161. Substrate-binding residues include D220 and D222. The active site involves D314. Transmembrane regions (helical) follow at residues 393–413 (IIVHCFTFIFYCVILPTSVFF), 430–450 (ITLCIVIATPRSFYLVIFWIL), 509–529 (EIMVGIYILCCACYGLFFGNT), and 530–550 (LLYLYLFMQAVAFLISGVGFV).

This sequence belongs to the glycosyltransferase 2 family. Plant cellulose synthase-like A subfamily.

It is found in the golgi apparatus membrane. The catalysed reaction is GDP-mannose + (glucomannan)n = GDP + (glucomannan)n+1.. Probable mannan synthase which consists of a 4-beta-mannosyltransferase activity on mannan using GDP-mannose. The beta-1,4-mannan product is the backbone for galactomannan synthesis by galactomannan galactosyltransferase. Galactomannan is a noncellulosic polysaccharides of plant cell wall. The protein is Probable glucomannan 4-beta-mannosyltransferase 10 of Arabidopsis thaliana (Mouse-ear cress).